The following is a 407-amino-acid chain: Phosphopentomutase (407 aa).

The Mn(2+) site is built by Asp10, Asp306, His311, Asp347, His348, and His359.

It belongs to the phosphopentomutase family. Requires Mn(2+) as cofactor.

The protein resides in the cytoplasm. The catalysed reaction is 2-deoxy-alpha-D-ribose 1-phosphate = 2-deoxy-D-ribose 5-phosphate. It carries out the reaction alpha-D-ribose 1-phosphate = D-ribose 5-phosphate. The protein operates within carbohydrate degradation; 2-deoxy-D-ribose 1-phosphate degradation; D-glyceraldehyde 3-phosphate and acetaldehyde from 2-deoxy-alpha-D-ribose 1-phosphate: step 1/2. Its function is as follows. Isomerase that catalyzes the conversion of deoxy-ribose 1-phosphate (dRib-1-P) and ribose 1-phosphate (Rib-1-P) to deoxy-ribose 5-phosphate (dRib-5-P) and ribose 5-phosphate (Rib-5-P), respectively. In Serratia proteamaculans (strain 568), this protein is Phosphopentomutase.